Reading from the N-terminus, the 431-residue chain is uncharacterized protein (431 aa).

Disordered regions lie at residues 1–37 (MFWRRLRPGAQDLAPKGLPGDGDFRRSSDPRLPKLTP) and 102–132 (PPPLLSAGASRESAPRQPGPGERERPRRRVA). Basic and acidic residues predominate over residues 22-32 (GDFRRSSDPRL). Low complexity predominate over residues 106–121 (LSAGASRESAPRQPGP). Positions 122–132 (GERERPRRRVA) are enriched in basic and acidic residues.

Its subcellular location is the cytoplasm. This is an uncharacterized protein from Homo sapiens (Human).